Here is a 404-residue protein sequence, read N- to C-terminus: Cysteine desulfurase IscS (404 aa).

Pyridoxal 5'-phosphate is bound by residues 75–76 (AT), Asn-155, Gln-183, and 203–205 (SAH). Lys-206 is subject to N6-(pyridoxal phosphate)lysine. Residue Thr-243 participates in pyridoxal 5'-phosphate binding. Cys-328 functions as the Cysteine persulfide intermediate in the catalytic mechanism. Cys-328 contacts [2Fe-2S] cluster.

The protein belongs to the class-V pyridoxal-phosphate-dependent aminotransferase family. NifS/IscS subfamily. Homodimer. Forms a heterotetramer with IscU, interacts with other sulfur acceptors. It depends on pyridoxal 5'-phosphate as a cofactor.

Its subcellular location is the cytoplasm. It carries out the reaction (sulfur carrier)-H + L-cysteine = (sulfur carrier)-SH + L-alanine. Its pathway is cofactor biosynthesis; iron-sulfur cluster biosynthesis. Its function is as follows. Master enzyme that delivers sulfur to a number of partners involved in Fe-S cluster assembly, tRNA modification or cofactor biosynthesis. Catalyzes the removal of elemental sulfur atoms from cysteine to produce alanine. Functions as a sulfur delivery protein for Fe-S cluster synthesis onto IscU, an Fe-S scaffold assembly protein, as well as other S acceptor proteins. This is Cysteine desulfurase IscS from Pseudomonas putida (strain W619).